We begin with the raw amino-acid sequence, 513 residues long: ATP synthase subunit alpha (513 aa).

Residue 169 to 176 (GDRQTGKT) coordinates ATP.

Belongs to the ATPase alpha/beta chains family. As to quaternary structure, F-type ATPases have 2 components, CF(1) - the catalytic core - and CF(0) - the membrane proton channel. CF(1) has five subunits: alpha(3), beta(3), gamma(1), delta(1), epsilon(1). CF(0) has three main subunits: a(1), b(2) and c(9-12). The alpha and beta chains form an alternating ring which encloses part of the gamma chain. CF(1) is attached to CF(0) by a central stalk formed by the gamma and epsilon chains, while a peripheral stalk is formed by the delta and b chains.

Its subcellular location is the cell inner membrane. It catalyses the reaction ATP + H2O + 4 H(+)(in) = ADP + phosphate + 5 H(+)(out). In terms of biological role, produces ATP from ADP in the presence of a proton gradient across the membrane. The alpha chain is a regulatory subunit. The chain is ATP synthase subunit alpha from Mannheimia succiniciproducens (strain KCTC 0769BP / MBEL55E).